We begin with the raw amino-acid sequence, 292 residues long: MAEITAALVKELREKTDAPMMECKKALTEAEGDLARAEEILRVKLGNKASKAAARVTAEGLIGLYISADAKQGAVIEVNCETDFVAKNDDFVAFVNKLAELVTTQKPADVAALSALPLGEGTVETTRTALVGKIGENISVRRFERIETANALASYVHGGKIGVLVEYAGAEEVGKDLAMHIAATKPRALNADGVPAADIAAERSVAEQKAAESGKPAEIVAKMVEGSVQKFLKEVTLLSQPFVKNDKQTVEQMLKEKSASINKFVLFVVGEGIEKKTSDFAAEVAAAAAGRA.

The interval 82 to 85 (TDFV) is involved in Mg(2+) ion dislocation from EF-Tu.

The protein belongs to the EF-Ts family.

Its subcellular location is the cytoplasm. In terms of biological role, associates with the EF-Tu.GDP complex and induces the exchange of GDP to GTP. It remains bound to the aminoacyl-tRNA.EF-Tu.GTP complex up to the GTP hydrolysis stage on the ribosome. The sequence is that of Elongation factor Ts from Bordetella petrii (strain ATCC BAA-461 / DSM 12804 / CCUG 43448).